The chain runs to 74 residues: ATP synthase F(1) complex subunit epsilon, mitochondrial (74 aa).

It belongs to the eukaryotic ATPase epsilon family. As to quaternary structure, component of the ATP synthase complex composed at least of ATP5F1A/subunit alpha, ATP5F1B/subunit beta, ATP5MC1/subunit c (homooctomer), MT-ATP6/subunit a, MT-ATP8/subunit 8, ATP5ME/subunit e, ATP5MF/subunit f, ATP5MG/subunit g, ATP5MK/subunit k, ATP5MJ/subunit j, ATP5F1C/subunit gamma, ATP5F1D/subunit delta, ATP5F1E/subunit epsilon, ATP5PF/subunit F6, ATP5PB/subunit b, ATP5PD/subunit d, ATP5PO/subunit OSCP. ATP synthase complex consists of a soluble F(1) head domain (subunits alpha(3) and beta(3)) - the catalytic core - and a membrane F(0) domain - the membrane proton channel (subunits c, a, 8, e, f, g, k and j). These two domains are linked by a central stalk (subunits gamma, delta, and epsilon) rotating inside the F1 region and a stationary peripheral stalk (subunits F6, b, d, and OSCP).

It localises to the mitochondrion. The protein localises to the mitochondrion inner membrane. Its function is as follows. Subunit epsilon, of the mitochondrial membrane ATP synthase complex (F(1)F(0) ATP synthase or Complex V) that produces ATP from ADP in the presence of a proton gradient across the membrane which is generated by electron transport complexes of the respiratory chain. ATP synthase complex consist of a soluble F(1) head domain - the catalytic core - and a membrane F(1) domain - the membrane proton channel. These two domains are linked by a central stalk rotating inside the F(1) region and a stationary peripheral stalk. During catalysis, ATP synthesis in the catalytic domain of F(1) is coupled via a rotary mechanism of the central stalk subunits to proton translocation. In vivo, can only synthesize ATP although its ATP hydrolase activity can be activated artificially in vitro. May be essential for the assembly of F(1) and may play an important role in the incorporation of the hydrophobic subunit c into the F(1)-c oligomer rotor of the mitochondrial ATP synthase complex. This is ATP synthase F(1) complex subunit epsilon, mitochondrial from Dictyostelium discoideum (Social amoeba).